The following is a 209-amino-acid chain: Large ribosomal subunit protein uL3c (209 aa).

The interval 132 to 154 is disordered; it reads PMSHGSKNHRLPGSIGAGSTPGR.

Belongs to the universal ribosomal protein uL3 family. In terms of assembly, part of the 50S ribosomal subunit.

It localises to the plastid. The protein resides in the cyanelle. Its function is as follows. One of the primary rRNA binding proteins, it binds directly near the 3'-end of the 23S rRNA, where it nucleates assembly of the 50S subunit. The polypeptide is Large ribosomal subunit protein uL3c (rpl3) (Cyanophora paradoxa).